Reading from the N-terminus, the 805-residue chain is Angiotensin-converting enzyme 2 (805 aa).

A signal peptide spans 1–17 (MSGSFWLLLSFAALTAA). Residues 18–740 (QSTTEELAKT…LSPPYRPPVT (723 aa)) are Extracellular-facing. One can recognise a Peptidase M2 domain in the interval 19–607 (STTEELAKTF…QNRNSFVGWD (589 aa)). Residues 30–41 (ETFNYEAQELSY) form an interaction with SARS S protein region. An N-linked (GlcNAc...) asparagine glycan is attached at Asn53. Interaction with SARS S protein regions lie at residues 82–84 (TYP) and 90–93 (DAKI). Cys133 and Cys141 are disulfide-bonded. Arg169 serves as a coordination point for chloride. Asn216 is a glycosylation site (N-linked (GlcNAc...) asparagine). Arg273 is a substrate binding site. Asn322 is a glycosylation site (N-linked (GlcNAc...) asparagine). A disulfide bridge connects residues Cys344 and Cys361. 345 to 346 (HP) lines the substrate pocket. The segment at 353-357 (KGDFR) is interaction with SARS S protein. His374 serves as a coordination point for Zn(2+). Glu375 serves as the catalytic Proton acceptor. Residues His378 and Glu402 each coordinate Zn(2+). Residues Trp477 and Lys481 each contribute to the chloride site. Residue His505 is the Proton donor of the active site. Tyr515 is a substrate binding site. Cys530 and Cys542 are joined by a disulfide. Asn546 is a glycosylation site (N-linked (GlcNAc...) asparagine). One can recognise a Collectrin-like domain in the interval 614–805 (SDQSIKVRIS…QHADDVQTSF (192 aa)). Residues 652-659 (REYFSKVK) form an essential for cleavage by ADAM17 region. Residues Asn660 and Asn690 are each glycosylated (N-linked (GlcNAc...) asparagine). An essential for cleavage by TMPRSS11D and TMPRSS2 region spans residues 697-716 (RSEVEDAIRMSRSRINDAFR). Residues 741–761 (IWLIVFGVVMGAIVVGIVLLI) traverse the membrane as a helical segment. Residues 762-805 (VSGIRNRRKNDQAGSEENPYASVDLNKGENNPGFQHADDVQTSF) lie on the Cytoplasmic side of the membrane. Residues 771 to 805 (NDQAGSEENPYASVDLNKGENNPGFQHADDVQTSF) are disordered. Residues 778–786 (ENPYASVDL) carry the LIR motif. Tyr781 is modified (phosphotyrosine). Residues 781 to 784 (YASV) carry the Endocytic sorting signal motif. The SH2-binding motif lies at 781–785 (YASVD). Ser783 is modified (phosphoserine). The PTB motif lies at 792–795 (NPGF). A PDZ-binding motif is present at residues 803 to 805 (TSF).

The protein belongs to the peptidase M2 family. As to quaternary structure, homodimer. Interacts with the catalytically active form of TMPRSS2. Interacts with SLC6A19; this interaction is essential for expression and function of SLC6A19 in intestine. Interacts with ITGA5:ITGB1. Probably interacts (via endocytic sorting signal motif) with AP2M1; the interaction is inhibited by phosphorylation of Tyr-781. Interacts (via PDZ-binding motif) with NHERF1 (via PDZ domains); the interaction may enhance ACE2 membrane residence. (Microbial infection) Interacts with SARS-CoV S protein. The cofactor is Zn(2+). Requires chloride as cofactor. Post-translationally, proteolytic cleavage by ADAM17 generates a secreted form. Also cleaved by serine proteases: TMPRSS2, TMPRSS11D and HPN/TMPRSS1. Phosphorylated. Phosphorylation at Tyr-781 probably inhibits interaction with AP2M1 and enables interactions with proteins containing SH2 domains.

It localises to the secreted. It is found in the cell membrane. The protein resides in the cytoplasm. Its subcellular location is the cell projection. The protein localises to the cilium. It localises to the apical cell membrane. The enzyme catalyses angiotensin II + H2O = angiotensin-(1-7) + L-phenylalanine. It carries out the reaction angiotensin I + H2O = angiotensin-(1-9) + L-leucine. Essential counter-regulatory carboxypeptidase of the renin-angiotensin hormone system that is a critical regulator of blood volume, systemic vascular resistance, and thus cardiovascular homeostasis. Converts angiotensin I to angiotensin 1-9, a nine-amino acid peptide with anti-hypertrophic effects in cardiomyocytes, and angiotensin II to angiotensin 1-7, which then acts as a beneficial vasodilator and anti-proliferation agent, counterbalancing the actions of the vasoconstrictor angiotensin II. Also removes the C-terminal residue from three other vasoactive peptides, neurotensin, kinetensin, and des-Arg bradykinin, but is not active on bradykinin. Also cleaves other biological peptides, such as apelins, casomorphins and dynorphin A. Plays an important role in amino acid transport by acting as binding partner of amino acid transporter SLC6A19 in intestine, regulating trafficking, expression on the cell surface, and its catalytic activity. Functionally, (Microbial infection) Acts as a receptor for human coronavirus SARS. The polypeptide is Angiotensin-converting enzyme 2 (ACE2) (Paguma larvata (Masked palm civet)).